Reading from the N-terminus, the 879-residue chain is MPTEANTYDPQRIESTAQHYWDSTHAFEVNEHSNKPKYYCLSMLPYPSGALHMGHVRNYTIGDVISRYKRMTGHNVLQPMGWDAFGLPAENAAIKNKVAPAQWTYKNIERMRTQLKSLGYAINWSREFATCQPDYYVHEQHMFTRLMRKGLAYRRNALVNWDPVDQTVLANEQVIDGRGWRSGAPVEKREIPQWFLRITDYAQELLDGLNTLDDWPEPVKTMQRNWIGRSEGLEIRFEVRDVDNNALEALRVFTTRPDTLFGVTFVSIAPEHPLALHAAKSNPGLAGLLTQMKQGGLSEAELKTQEKRGMDTGLKAIHPITNEQLPVWVANFVLMAYGTGAVMAVPGHDQRDQEFANKYGLPIRQVIALKEPKNQDESTWEPDVWRDWYADKTREFELINSAEFDGLDYQGAFEVLAERFERQGRGQRRVNYRLRDWGVSRQRYWGCPIPVIYCPTCGAVPVPENQLPVILPENVAFSGTGSPIKTDPEWRKTTCPECGGPAERETDTFDTFMESSWYYARYTSPNAREMLDKRANYWLPVDQYIGGIEHAILHLMYFRFYHKLMRDARLVDSDEPAINLLTQGMVIAETFYRKNPDGSKDWINPADVNVECDERGRITGATLISDGQPVLIGATEKMSKSKNNGVDPQIMVTKYGADTVRLFSMFAAPPEQSLEWNETGVEGMARFLRRLWTQVHHHASHGPATALDITALDTAQKAIRCKTHNTIARVEDDYGRRRSFNTAIAAVMELSNTLARFDDTTTQSHAVRQEALETMVLLLNPITPHTSHALWQTLGHPETLLEDLPFPKVDTTALVRETAILAVQINGKLRGTIEVATDAPREHIENNALTEPNTARFLEGLTVLKIIIVPGKIVNIVAR.

The 'HIGH' region motif lies at 45 to 55 (PYPSGALHMGH). The 'KMSKS' region motif lies at 637-641 (KMSKS). Lys640 provides a ligand contact to ATP.

This sequence belongs to the class-I aminoacyl-tRNA synthetase family.

It is found in the cytoplasm. The catalysed reaction is tRNA(Leu) + L-leucine + ATP = L-leucyl-tRNA(Leu) + AMP + diphosphate. The polypeptide is Leucine--tRNA ligase (Xylella fastidiosa (strain M23)).